The primary structure comprises 398 residues: L-talarate/galactarate dehydratase (398 aa).

Residues Asp46–Lys48, Lys82–Arg83, and Lys195 contribute to the substrate site. Lys197 (proton acceptor) is an active-site residue. Asp226 is a Mg(2+) binding site. Asn228 provides a ligand contact to substrate. 2 residues coordinate Mg(2+): Glu252 and Glu278. His328 functions as the Proton donor/acceptor in the catalytic mechanism. Glu348 provides a ligand contact to substrate.

The protein belongs to the mandelate racemase/muconate lactonizing enzyme family. In terms of assembly, homooctamer; tetramer of dimers. The cofactor is Mg(2+).

The enzyme catalyses L-altrarate = 5-dehydro-4-deoxy-D-glucarate + H2O. The catalysed reaction is galactarate = 5-dehydro-4-deoxy-D-glucarate + H2O. It catalyses the reaction L-altrarate = galactarate. Competitively inhibited by tartronate. Functionally, catalyzes the efficient dehydration of both L-talarate (also called L-altrarate) and galactarate to 5-keto-4-deoxy-D-glucarate (5-KDG). Also catalyzes the epimerization of L-talarate to galactarate; epimerization occurs in competition with dehydration. Is required for the utilization of L-talarate as a carbon source. Also functions in galactarate utilization. Is not active on other acid sugars. The protein is L-talarate/galactarate dehydratase of Salmonella typhimurium (strain LT2 / SGSC1412 / ATCC 700720).